A 322-amino-acid chain; its full sequence is Sideroflexin-1 (322 aa).

The residue at position 2 (Ser2) is an N-acetylserine. Residues 2 to 102 are Mitochondrial matrix-facing; the sequence is SGELPPNINI…MSAQVPMNMT (101 aa). Residues 103 to 120 form a helical membrane-spanning segment; it reads ITGCMMTFYRTTPAVLFW. Residues 121–146 are Mitochondrial intermembrane-facing; sequence QWINQSFNAVVNYTNRSGDAPLTVNE. A helical membrane pass occupies residues 147–167; the sequence is LGTAYVSATTGAVATALGLNA. The Mitochondrial matrix segment spans residues 168–174; the sequence is LTKHVSP. The helical transmembrane segment at 175 to 195 threads the bilayer; it reads LIGRFVPFAAVAAANCINIPL. At 196-228 the chain is on the mitochondrial intermembrane side; the sequence is MRQRELKVGIPVTDENGNRLGESANAAKQAITQ. The chain crosses the membrane as a helical span at residues 229 to 249; the sequence is VVVSRILMAAPGMAIPPFIMN. The Mitochondrial matrix segment spans residues 250-266; sequence TLEKKAFLKRFPWMSAP. The helical transmembrane segment at 267–287 threads the bilayer; the sequence is VQVGIVGFCLVFATPLCCALF. Residues 288-322 lie on the Mitochondrial intermembrane side of the membrane; sequence PQKSSMSVTSLEAELQARIRETYPELRRVYFNKGL.

The protein belongs to the sideroflexin family.

It localises to the mitochondrion inner membrane. The catalysed reaction is L-serine(in) = L-serine(out). It catalyses the reaction L-alanine(in) = L-alanine(out). The enzyme catalyses L-cysteine(in) = L-cysteine(out). Amino acid transporter importing serine, an essential substrate of the mitochondrial branch of the one-carbon pathway, into mitochondria. Mitochondrial serine is then converted to glycine and formate, which exits to the cytosol where it is used to generate the charged folates that serve as one-carbon donors. May also transport other amino acids including alanine and cysteine. The polypeptide is Sideroflexin-1 (SFXN1) (Bos taurus (Bovine)).